Reading from the N-terminus, the 340-residue chain is Cytochrome P450 monooxygenase cheG (340 aa).

The N-linked (GlcNAc...) asparagine glycan is linked to N25. The chain crosses the membrane as a helical span at residues M37–I57. C283 provides a ligand contact to heme. Residues L308 to L340 form a disordered region. N322 is a glycosylation site (N-linked (GlcNAc...) asparagine).

This sequence belongs to the cytochrome P450 family. It depends on heme as a cofactor.

It is found in the membrane. Its pathway is secondary metabolite biosynthesis. In terms of biological role, cytochrome P450 monooxygenase; part of the gene cluster that mediates the biosynthesis of chaetoglobosin A which has a unique inhibitory activity against actin polymerization in mammalian cells. Chaetoglobosin A and its intermediates are involved in the morphological differentiation of C.globosum. The first step of the pathway is the synthesis of prochaetoglobosin I via condensation of one acetyl-CoA, 8 malonyl-CoA, and a L-tryptophan molecule by the PKS-NRPS hybrid synthetase cheA, followed by reduction of backbone double bond to install desired geometry by the enoyl reductase cheB. Further multiple oxidation steps performed by the cytochrome P450 monooxygenases cheE and cheG, as well as by the FAD-linked oxidoreductase cheF, lead to the formation of chaetoglobosin A. Depending on the order of action of these reductases, distinct intermediates can be identified. Within the pathway, the cytochrome P450 monooxygenase cheE catalyzes a stereospecific epoxidation on prochaetoglobosin I, cytoglobosin D, and chaetoglobosin J intermediates. The FAD-linked oxidoreductase cheF performs dehydrogenation of the C-20 hydroxyl groups in the 20-dihyrochaetoglobosin A and cytoglobosin D intermediates. Finally, the cytochrome P450 monooxygenase cheG can catalyze the stereospecific dihydroxylation of prochaetoglobosin I and prochaetoglobosin IV at C-19 and C-20, respectively. The Diels-Alderase cheD may play a role in the post-PKS-NRPS biosynthetic steps catalyzing Diels-Alder cyclization. This Chaetomium globosum (strain ATCC 6205 / CBS 148.51 / DSM 1962 / NBRC 6347 / NRRL 1970) (Soil fungus) protein is Cytochrome P450 monooxygenase cheG.